Consider the following 164-residue polypeptide: Dynein regulatory complex protein 8 (164 aa).

2 EF-hand domains span residues Glu-16–Cys-51 and Ala-94–Pro-129.

It belongs to the DRC8 family. As to quaternary structure, component of the nexin-dynein regulatory complex (N-DRC).

It is found in the cytoplasm. Its subcellular location is the cytoskeleton. The protein resides in the flagellum axoneme. In terms of biological role, component of the nexin-dynein regulatory complex (N-DRC), a key regulator of ciliary/flagellar motility which maintains the alignment and integrity of the distal axoneme and regulates microtubule sliding in motile axonemes. The sequence is that of Dynein regulatory complex protein 8 (Efcab2) from Mus musculus (Mouse).